We begin with the raw amino-acid sequence, 219 residues long: Ribose-5-phosphate isomerase A (219 aa).

Substrate-binding positions include 28–31 (SGST), 81–84 (DGAD), and 94–97 (KGGG). The Proton acceptor role is filled by Glu103. Lys121 serves as a coordination point for substrate.

It belongs to the ribose 5-phosphate isomerase family. Homodimer.

It catalyses the reaction aldehydo-D-ribose 5-phosphate = D-ribulose 5-phosphate. Its pathway is carbohydrate degradation; pentose phosphate pathway; D-ribose 5-phosphate from D-ribulose 5-phosphate (non-oxidative stage): step 1/1. Its function is as follows. Catalyzes the reversible conversion of ribose-5-phosphate to ribulose 5-phosphate. The sequence is that of Ribose-5-phosphate isomerase A from Actinobacillus pleuropneumoniae serotype 5b (strain L20).